The chain runs to 110 residues: uncharacterized protein (110 aa).

Disordered stretches follow at residues 1 to 42 and 66 to 110; these read MEWG…RAQQ and RQLG…AAEP. Residues 36–68 are a coiled coil; it reads REERAQQLLDAVEQRQRQLLDTIAACEEMLRQL.

This is an uncharacterized protein from Homo sapiens (Human).